The following is a 78-amino-acid chain: Small ribosomal subunit protein uS17 (78 aa).

It belongs to the universal ribosomal protein uS17 family. In terms of assembly, part of the 30S ribosomal subunit.

In terms of biological role, one of the primary rRNA binding proteins, it binds specifically to the 5'-end of 16S ribosomal RNA. In Agrobacterium fabrum (strain C58 / ATCC 33970) (Agrobacterium tumefaciens (strain C58)), this protein is Small ribosomal subunit protein uS17.